A 531-amino-acid polypeptide reads, in one-letter code: Transmembrane protein 266 (531 aa).

Residues 1–102 (MALAASFNMT…VFLLSASLNS (102 aa)) lie on the Cytoplasmic side of the membrane. Residues 103–123 (FLVACVILVVILLTLELLIDI) traverse the membrane as a helical segment. The Extracellular portion of the chain corresponds to 124 to 129 (KLLQFS). Residues 130–150 (SAFQFAGVIHWISLVILSVFF) form a helical membrane-spanning segment. Topologically, residues 151 to 169 (SETVLRIVVLGIWDYIENK) are cytoplasmic. A helical membrane pass occupies residues 170 to 190 (IEVFDGAVIILSLAPMVASTV). Residues 191–199 (ANGPRSPWD) are Extracellular-facing. The helical transmembrane segment at 200–220 (AISLIIMLRIWRVKRVIDAYV) threads the bilayer. Over 221–531 (LPVKLEMEMV…EQKLHRVPEA (311 aa)) the chain is Cytoplasmic. A coiled-coil region spans residues 231–251 (IQQYEKAKVIQDEQLERLTQI). The interval 380-477 (NGTGATSESA…PAGSAQTSPE (98 aa)) is disordered. Residues 383–412 (GATSESASRSSVTRAQSDSSQTLGSSTDCS) are compositionally biased toward polar residues. Residues 421-431 (EPGPSPLPLPP) are compositionally biased toward pro residues.

As to quaternary structure, homodimer; disulfide-linked.

It is found in the cell membrane. It localises to the cell projection. The protein localises to the dendrite. The protein resides in the perikaryon. Voltage-sensor protein present on the post-synaptic side of glutamatergic mossy fibers and granule cells in the cerebellum. Despite the presence of a voltage-sensor segment, does not form a functional ion channel and its precise role remains unclear. Undergoes both rapid and slow structural rearrangements in response to changes in voltage. Contains a zinc-binding site that can regulate the slow conformational transition. This Macaca fascicularis (Crab-eating macaque) protein is Transmembrane protein 266.